Reading from the N-terminus, the 450-residue chain is Asparagine--tRNA ligase (450 aa).

The protein belongs to the class-II aminoacyl-tRNA synthetase family. As to quaternary structure, homodimer.

The protein localises to the cytoplasm. It catalyses the reaction tRNA(Asn) + L-asparagine + ATP = L-asparaginyl-tRNA(Asn) + AMP + diphosphate + H(+). This chain is Asparagine--tRNA ligase, found in Mycoplasmopsis pulmonis (strain UAB CTIP) (Mycoplasma pulmonis).